Reading from the N-terminus, the 960-residue chain is Phosphoenolpyruvate carboxylase 1 (960 aa).

Serine 7 carries the phosphoserine modification. Residues histidine 168 and lysine 596 contribute to the active site.

This sequence belongs to the PEPCase type 1 family. Homotetramer. Mg(2+) serves as cofactor.

The protein localises to the cytoplasm. It carries out the reaction oxaloacetate + phosphate = phosphoenolpyruvate + hydrogencarbonate. The protein operates within photosynthesis; C3 acid pathway. By light-reversible phosphorylation. Through the carboxylation of phosphoenolpyruvate (PEP) it forms oxaloacetate, a four-carbon dicarboxylic acid source for the tricarboxylic acid cycle. The chain is Phosphoenolpyruvate carboxylase 1 (PEPC) from Sorghum bicolor (Sorghum).